Here is a 587-residue protein sequence, read N- to C-terminus: Bifunctional lycopene cyclase/phytoene synthase (587 aa).

Residues 1 to 236 form a lycopene beta-cyclase region; sequence MGLDYILVHV…IVFGLVCIDY (236 aa). The next 7 membrane-spanning stretches (helical) occupy residues 5 to 25, 35 to 55, 65 to 85, 91 to 111, 116 to 136, 145 to 165, and 218 to 238; these read YILVHVTYNIPLAGILTLVYW, KISTLVIISLVATIPWDSYLV, NGVIGWTLYDIPSEEVFFFII, SLVYLILTRWLVLPMYLGTVA, LIGASILLLAISVGLIALCFG, IITWAGPFLLIQWVFSSGFII, and LFFLITNIVIVFGLVCIDYAI. Positions 243–587 are phytoene synthase; the sequence is CELVQSPQAV…VAYRAMAWRK (345 aa).

This sequence in the N-terminal section; belongs to the lycopene beta-cyclase family. The protein in the C-terminal section; belongs to the phytoene/squalene synthase family.

Its subcellular location is the membrane. It catalyses the reaction all-trans-lycopene = gamma-carotene. It carries out the reaction gamma-carotene = all-trans-beta-carotene. The enzyme catalyses 2 (2E,6E,10E)-geranylgeranyl diphosphate = 15-cis-phytoene + 2 diphosphate. The protein operates within carotenoid biosynthesis; beta-carotene biosynthesis. Its pathway is carotenoid biosynthesis; phytoene biosynthesis; all-trans-phytoene from geranylgeranyl diphosphate: step 1/1. Bifunctional enzyme that catalyzes the reactions from geranylgeranyl diphosphate to phytoene (phytoene synthase) and lycopene to beta-carotene via the intermediate gamma-carotene (lycopene cyclase). The protein is Bifunctional lycopene cyclase/phytoene synthase of Aspergillus oryzae (strain ATCC 42149 / RIB 40) (Yellow koji mold).